The following is a 421-amino-acid chain: Histidine--tRNA ligase (421 aa).

The protein belongs to the class-II aminoacyl-tRNA synthetase family.

It is found in the cytoplasm. The catalysed reaction is tRNA(His) + L-histidine + ATP = L-histidyl-tRNA(His) + AMP + diphosphate + H(+). This Pyrobaculum islandicum (strain DSM 4184 / JCM 9189 / GEO3) protein is Histidine--tRNA ligase.